The primary structure comprises 426 residues: Histone deacetylase 9 (426 aa).

The segment at 6-318 (KISYFYDGDV…WTVETGILLD (313 aa)) is histone deacetylase. The active-site Proton donor/acceptor is histidine 137. Zn(2+) is bound by residues aspartate 172, histidine 174, and aspartate 261. The tract at residues 383-426 (PDFYIPDFDEDEQNPDVRADQRSRDKQIQRDDEYFDGDNDNDAS) is disordered. Over residues 397-414 (PDVRADQRSRDKQIQRDD) the composition is skewed to basic and acidic residues. Over residues 415-426 (EYFDGDNDNDAS) the composition is skewed to acidic residues.

This sequence belongs to the histone deacetylase family. HD type 1 subfamily. As to quaternary structure, interacts with AHL22. Binds to farnesylated ASG2 in the cytosol. It depends on Zn(2+) as a cofactor.

It localises to the nucleus. The protein localises to the cytoplasm. The protein resides in the cytosol. It carries out the reaction N(6)-acetyl-L-lysyl-[histone] + H2O = L-lysyl-[histone] + acetate. Responsible for the deacetylation of lysine residues on the N-terminal part of the core histones (H2A, H2B, H3 and H4). Histone deacetylation gives a tag for epigenetic repression and plays an important role in transcriptional regulation, cell cycle progression and developmental events. Histone deacetylases act via the formation of large multiprotein complexes. The sequence is that of Histone deacetylase 9 (HDA9) from Arabidopsis thaliana (Mouse-ear cress).